A 534-amino-acid chain; its full sequence is Neryl diphosphate diphosphatase, chloroplastic (534 aa).

The Mg(2+) site is built by D272, D276, D416, and E424. Positions D272–D276 match the DDXXD motif motif.

This sequence belongs to the terpene synthase family. It depends on Mg(2+) as a cofactor.

It localises to the plastid. It is found in the chloroplast. It carries out the reaction neryl diphosphate + H2O = nerol + diphosphate. Its pathway is secondary metabolite biosynthesis; terpenoid biosynthesis. In terms of biological role, monoterpene synthase that catalyzes the hydrolysis of neryl diphosphate (NPP) to form nerol and diphosphate. Is specific for NPP and has no hydrolase activity toward geranyl diphosphate (GPP) or farnesyl diphosphate (FPP). The monoterpene nerol may have an insect repellent effect for the plant leaves. The protein is Neryl diphosphate diphosphatase, chloroplastic of Glycine max (Soybean).